Reading from the N-terminus, the 224-residue chain is Elongation factor 1-beta (224 aa).

Belongs to the EF-1-beta/EF-1-delta family. As to quaternary structure, EF-1 is composed of 4 subunits: alpha, beta (1B-alpha=beta'), delta (1B-beta), and gamma (1B-gamma).

Its function is as follows. EF-1-beta and EF-1-beta' stimulate the exchange of GDP bound to EF-1-alpha to GTP. This chain is Elongation factor 1-beta, found in Oryza sativa subsp. japonica (Rice).